The chain runs to 288 residues: Ribosomal protein L11 methyltransferase (288 aa).

Residues threonine 134, glycine 157, aspartate 179, and asparagine 224 each coordinate S-adenosyl-L-methionine.

This sequence belongs to the methyltransferase superfamily. PrmA family.

The protein resides in the cytoplasm. The enzyme catalyses L-lysyl-[protein] + 3 S-adenosyl-L-methionine = N(6),N(6),N(6)-trimethyl-L-lysyl-[protein] + 3 S-adenosyl-L-homocysteine + 3 H(+). In terms of biological role, methylates ribosomal protein L11. The polypeptide is Ribosomal protein L11 methyltransferase (Caulobacter sp. (strain K31)).